We begin with the raw amino-acid sequence, 328 residues long: MDLNTILIIVGIVALVALIVHGLWSNRREKSKYFDKANKFDRTSLTSRSHTQEEMVQPNNISPNTYVENGHTPISQPTTEKLPSEAELIDYRQSDKSVDDIKISIPNTQPIYDMGNHRSEPIQPTQPQYDMPTANNVASMTLEQLEAQSQNVGFNGINSSSPELRVQLAELSHEEHQVDYNLSFNEPKAETTAQPKQTTGYIQLYLIPKSSEEFNGAKLVQALENLGFILGKDEMYHRHLDLSVASPVLFSVANLEQPGTFNAYNLAEFNTIGIVLFMQLPSPGNNLANLRMMMRAAHTLAEDLQGVILTEEQEIFDANAEQAYLARV.

Over 1 to 4 the chain is Periplasmic; it reads MDLN. A helical transmembrane segment spans residues 5-25; that stretch reads TILIIVGIVALVALIVHGLWS. Residues 26–328 are Cytoplasmic-facing; the sequence is NRREKSKYFD…NAEQAYLARV (303 aa). Residues 44-82 form a disordered region; the sequence is SLTSRSHTQEEMVQPNNISPNTYVENGHTPISQPTTEKL. Over residues 57-81 the composition is skewed to polar residues; it reads QPNNISPNTYVENGHTPISQPTTEK.

The protein belongs to the ZipA family. As to quaternary structure, interacts with FtsZ via their C-terminal domains.

It localises to the cell inner membrane. In terms of biological role, essential cell division protein that stabilizes the FtsZ protofilaments by cross-linking them and that serves as a cytoplasmic membrane anchor for the Z ring. Also required for the recruitment to the septal ring of downstream cell division proteins. The sequence is that of Cell division protein ZipA from Haemophilus influenzae (strain PittGG).